The following is a 556-amino-acid chain: 2-isopropylmalate synthase (556 aa).

The region spanning 33-307 (PIWCSSDLRD…NPELDFSDID (275 aa)) is the Pyruvate carboxyltransferase domain. Mg(2+) is bound by residues Asp-42, His-246, His-248, and Asn-282. A regulatory domain region spans residues 439–556 (ANTPYALISH…SLSQAQAKAA (118 aa)).

Belongs to the alpha-IPM synthase/homocitrate synthase family. LeuA type 2 subfamily. Homodimer. Requires Mg(2+) as cofactor.

It localises to the cytoplasm. It catalyses the reaction 3-methyl-2-oxobutanoate + acetyl-CoA + H2O = (2S)-2-isopropylmalate + CoA + H(+). Its pathway is amino-acid biosynthesis; L-leucine biosynthesis; L-leucine from 3-methyl-2-oxobutanoate: step 1/4. Catalyzes the condensation of the acetyl group of acetyl-CoA with 3-methyl-2-oxobutanoate (2-ketoisovalerate) to form 3-carboxy-3-hydroxy-4-methylpentanoate (2-isopropylmalate). This chain is 2-isopropylmalate synthase, found in Pseudomonas syringae pv. tomato (strain ATCC BAA-871 / DC3000).